Reading from the N-terminus, the 438-residue chain is Probable tRNA pseudouridine synthase D (438 aa).

The Nucleophile role is filled by aspartate 86. One can recognise a TRUD domain in the interval 165–390 (GVPNFFGIQR…SKGTRREVLL (226 aa)).

Belongs to the pseudouridine synthase TruD family.

It catalyses the reaction uridine(13) in tRNA = pseudouridine(13) in tRNA. Its function is as follows. Could be responsible for synthesis of pseudouridine from uracil-13 in transfer RNAs. This Methanosarcina mazei (strain ATCC BAA-159 / DSM 3647 / Goe1 / Go1 / JCM 11833 / OCM 88) (Methanosarcina frisia) protein is Probable tRNA pseudouridine synthase D.